The chain runs to 517 residues: GMP synthase [glutamine-hydrolyzing] (517 aa).

The Glutamine amidotransferase type-1 domain maps to 9–199 (RILILDFGSQ…VLGVCGCERL (191 aa)). Residue Cys-86 is the Nucleophile of the active site. Catalysis depends on residues His-173 and Glu-175. One can recognise a GMPS ATP-PPase domain in the interval 200–392 (WTSESIIEDA…LGLPYNMLYR (193 aa)). 227-233 (SGGVDSS) is an ATP binding site.

Homodimer.

The enzyme catalyses XMP + L-glutamine + ATP + H2O = GMP + L-glutamate + AMP + diphosphate + 2 H(+). It functions in the pathway purine metabolism; GMP biosynthesis; GMP from XMP (L-Gln route): step 1/1. In terms of biological role, catalyzes the synthesis of GMP from XMP. The sequence is that of GMP synthase [glutamine-hydrolyzing] from Vibrio cholerae serotype O1 (strain ATCC 39541 / Classical Ogawa 395 / O395).